The primary structure comprises 694 residues: Elongation factor G (694 aa).

Residues 9–288 (SKIRNIGIMA…VIVKWLPSPK (280 aa)) enclose the tr-type G domain. GTP-binding positions include 18–25 (AHIDAGKT), 82–86 (DTPGH), and 136–139 (NKMD).

It belongs to the TRAFAC class translation factor GTPase superfamily. Classic translation factor GTPase family. EF-G/EF-2 subfamily.

It localises to the cytoplasm. Functionally, catalyzes the GTP-dependent ribosomal translocation step during translation elongation. During this step, the ribosome changes from the pre-translocational (PRE) to the post-translocational (POST) state as the newly formed A-site-bound peptidyl-tRNA and P-site-bound deacylated tRNA move to the P and E sites, respectively. Catalyzes the coordinated movement of the two tRNA molecules, the mRNA and conformational changes in the ribosome. The protein is Elongation factor G of Chlamydia abortus (strain DSM 27085 / S26/3) (Chlamydophila abortus).